The primary structure comprises 109 residues: ATPase inhibitor mai-2, mitochondrial (109 aa).

2 disordered regions span residues 17-39 and 73-95; these read RFSTGGHGDGAGRGGGSGGSIRD and QEVDHHKSQLENHQKVLDRHQKR. A compositionally biased stretch (gly residues) spans 21–35; that stretch reads GGHGDGAGRGGGSGG. Residues 45–109 are a coiled coil; it reads GKMEAAREDE…EAEERALGKE (65 aa).

It belongs to the ATPase inhibitor family.

It localises to the mitochondrion. Its function is as follows. Thought to be a regulatory component of the ATP-synthesizing complex in the mitochondria. The polypeptide is ATPase inhibitor mai-2, mitochondrial (Caenorhabditis briggsae).